Reading from the N-terminus, the 866-residue chain is Protein mono-ADP-ribosyltransferase PARP9 (866 aa).

A Phosphoserine modification is found at Ser42. 2 Macro domains span residues 109–298 (QRVF…ESIL) and 313–492 (ASTM…TKRS). Residues 635–853 (TNQQEKLDKM…YSSGPGMVSS (219 aa)) enclose the PARP catalytic domain.

Belongs to the ARTD/PARP family. In terms of assembly, forms a stable complex with E3 ligase DTX3L; the interaction is required for PARP9 mediated ADP-ribosylation of ubiquitin. Interacts (via PARP catalytic domain) with DTX3L (via N-terminus). Forms a complex with STAT1 and DTX3L independently of IFNB1 or IFNG-mediated STAT1 'Tyr-701' phosphorylation. Forms a complex with STAT1, DTX3L and histone H2B H2BC9/H2BJ; the interaction is likely to induce H2BC9/H2BJ ubiquitination. Interacts (via N-terminus) with STAT1. Interacts with PARP14 in IFNG-stimulated macrophages; the interaction prevents PARP14-mediated STAT1 and STAT6 ADP-riboslylation. Interacts with PARP1 (when poly-ADP-ribosylated). In terms of processing, ADP-ribosylated by PARP14. As to expression, highly expressed in the thymus and intestine. Expressed in macrophages.

Its subcellular location is the cytoplasm. The protein localises to the cytosol. It is found in the nucleus. It carries out the reaction [protein]-C-terminal glycine + NAD(+) = [protein]-C-terminal O-(ADP-D-ribosyl)-glycine + nicotinamide. Its activity is regulated as follows. Binding to poly(ADP-ribose) does not affect its activity. In terms of biological role, ADP-ribosyltransferase which, in association with E3 ligase DTX3L, plays a role in DNA damage repair and in immune responses including interferon-mediated antiviral defenses. Within the complex, enhances DTX3L E3 ligase activity which is further enhanced by PARP9 binding to poly(ADP-ribose). In addition, positively regulates DTXL3 protein levels. In association with DTX3L and in presence of E1 and E2 enzymes, mediates NAD(+)-dependent mono-ADP-ribosylation of ubiquitin which prevents ubiquitin conjugation to substrates such as histones. During DNA repair, PARP1 recruits PARP9/BAL1-DTX3L complex to DNA damage sites via PARP9 binding to ribosylated PARP1. Subsequent PARP1-dependent PARP9/BAL1-DTX3L-mediated ubiquitination promotes the rapid and specific recruitment of 53BP1/TP53BP1, UIMC1/RAP80, and BRCA1 to DNA damage sites. In response to DNA damage, PARP9-DTX3L complex is required for efficient non-homologous end joining (NHEJ) but the complex function is restrained by PARP9 activity. Dispensable for B-cell receptor (BCR) assembly through V(D)J recombination and class switch recombination (CSR). In macrophages, positively regulates pro-inflammatory cytokines production in response to IFNG stimulation by suppressing PARP14-mediated STAT1 ADP-ribosylation and thus promoting STAT1 phosphorylation. Also suppresses PARP14-mediated STAT6 ADP-ribosylation. In Mus musculus (Mouse), this protein is Protein mono-ADP-ribosyltransferase PARP9 (Parp9).